A 161-amino-acid polypeptide reads, in one-letter code: Ferredoxin/F(420)H(2)-dependent CoB-CoM heterodisulfide reductase subunit C (161 aa).

2 4Fe-4S ferredoxin-type domains span residues 10–40 (KAEG…LNTR) and 51–82 (AAVL…TDAI). [4Fe-4S] cluster is bound by residues Cys-19, Cys-22, Cys-25, Cys-29, Cys-62, Cys-65, Cys-68, and Cys-72.

This sequence belongs to the HdrC family. The ferredoxin/F(420)H(2)-dependent CoB-CoM heterodisulfide reductase is composed of three subunits; HdrA2, HdrB2 and HdrC2. It depends on [4Fe-4S] cluster as a cofactor.

It is found in the cytoplasm. The catalysed reaction is coenzyme B + coenzyme M + 2 oxidized [2Fe-2S]-[ferredoxin] = coenzyme M-coenzyme B heterodisulfide + 2 reduced [2Fe-2S]-[ferredoxin] + 2 H(+). It carries out the reaction coenzyme B + 2 oxidized coenzyme F420-(gamma-L-Glu)(n) + coenzyme M + 2 reduced [2Fe-2S]-[ferredoxin] + 4 H(+) = coenzyme M-coenzyme B heterodisulfide + 2 reduced coenzyme F420-(gamma-L-Glu)(n) + 2 oxidized [2Fe-2S]-[ferredoxin]. It functions in the pathway cofactor metabolism; coenzyme M-coenzyme B heterodisulfide reduction; coenzyme B and coenzyme M from coenzyme M-coenzyme B heterodisulfide: step 1/1. Functionally, part of a complex that catalyzes the reversible reduction of CoM-S-S-CoB to the thiol-coenzymes H-S-CoM (coenzyme M) and H-S-CoB (coenzyme B). Catalyzes the transfer of electrons from ferredoxin to CoM-S-S-CoB during methanogenesis from acetate. Electrons transfer from ferredoxin to CoM-S-S-CoB via HdrA2, HdrC2 and HdrB2. In addition, the complex can use electron bifurcation to direct electron pairs from reduced coenzyme F420 towards the reduction of both ferredoxin and CoB-CoM heterodisulfide. This activity may take place during Fe(III)-dependent anaerobic methane oxidation. The sequence is that of Ferredoxin/F(420)H(2)-dependent CoB-CoM heterodisulfide reductase subunit C from Methanosarcina acetivorans (strain ATCC 35395 / DSM 2834 / JCM 12185 / C2A).